The chain runs to 200 residues: Adenylyl-sulfate kinase (200 aa).

36–43 contacts ATP; it reads GLSGSGKS. The active-site Phosphoserine intermediate is S110.

It belongs to the APS kinase family.

The enzyme catalyses adenosine 5'-phosphosulfate + ATP = 3'-phosphoadenylyl sulfate + ADP + H(+). It functions in the pathway sulfur metabolism; hydrogen sulfide biosynthesis; sulfite from sulfate: step 2/3. Functionally, catalyzes the synthesis of activated sulfate. This chain is Adenylyl-sulfate kinase, found in Clostridium acetobutylicum (strain ATCC 824 / DSM 792 / JCM 1419 / IAM 19013 / LMG 5710 / NBRC 13948 / NRRL B-527 / VKM B-1787 / 2291 / W).